The primary structure comprises 643 residues: 1-deoxy-D-xylulose-5-phosphate synthase (643 aa).

Residues histidine 89 and 130 to 132 (GHS) each bind thiamine diphosphate. Aspartate 161 serves as a coordination point for Mg(2+). Thiamine diphosphate contacts are provided by residues 162–163 (GA), asparagine 190, phenylalanine 297, and glutamate 380. Residue asparagine 190 coordinates Mg(2+).

It belongs to the transketolase family. DXPS subfamily. Homodimer. Requires Mg(2+) as cofactor. It depends on thiamine diphosphate as a cofactor.

It carries out the reaction D-glyceraldehyde 3-phosphate + pyruvate + H(+) = 1-deoxy-D-xylulose 5-phosphate + CO2. The protein operates within metabolic intermediate biosynthesis; 1-deoxy-D-xylulose 5-phosphate biosynthesis; 1-deoxy-D-xylulose 5-phosphate from D-glyceraldehyde 3-phosphate and pyruvate: step 1/1. Its function is as follows. Catalyzes the acyloin condensation reaction between C atoms 2 and 3 of pyruvate and glyceraldehyde 3-phosphate to yield 1-deoxy-D-xylulose-5-phosphate (DXP). The chain is 1-deoxy-D-xylulose-5-phosphate synthase from Hahella chejuensis (strain KCTC 2396).